The sequence spans 629 residues: MSDDQQNGKQNTTTTTSTPTEQDDIEEKLFRHQLTEFYSANGTFLKNSSLESIIMESIGIQSNNNNNNNNDSVNNNSNNNINNSNYNNNNNNIGGNIGTIGSINSINSDMNDIKLGDMLNMGNVLNSGSGLQTRLKRKEILQQPTTPPISTEPTRTYDVFYDKDLDYHKTLRLFNKRLFLHCLRQKALSLKDSIQNSEESDTSSHSSIQSNDHRPLKKQKITTTIKKVKDSSPTLEESSLISKKKSPSSSSSSSSLINSPTTSKETSPVKDTKPTINPKSLFGLSSTIPLIPRVKTEKEKEKEKEIEKEKEKEKEKEKEKEKEKEKEIEKEREKEKEREREREREREREREREREREREREREKEKEKEREREREREREREREREKEFEKERREREKEREREKLNITKDKEKQVIRETTIDETLNKETPHKPTPHITTKKSPNLTPPISSTASPPSVTTYSSLIPSIPTPQSAAATTTTPSSATLTAVSATIPTPTLTPTLSSPTSTSPTTATTLASNNSTITSTTNVNNNNNNNNNNNNNNNNNNNNNNNNNNKFSTPDDFKSLNWIPFLKEDNQQVSEKELLERRMDINQSKQLLLQVINSLNQERTIIEKKLLSDFKNSNTNSSKQ.

Over residues 1–11 the composition is skewed to polar residues; sequence MSDDQQNGKQN. Disordered regions lie at residues 1–24, 62–87, 197–464, and 493–560; these read MSDD…EQDD, SNNN…SNYN, SEES…SSLI, and PTPT…STPD. Over residues 247–264 the composition is skewed to low complexity; sequence PSSSSSSSSLINSPTTSK. The segment covering 274-288 has biased composition (polar residues); sequence PTINPKSLFGLSSTI. The segment covering 294–430 has biased composition (basic and acidic residues); it reads VKTEKEKEKE…DETLNKETPH (137 aa). Low complexity-rich tracts occupy residues 434–464 and 493–554; these read PHIT…SSLI and PTPT…NNNN.

This is an uncharacterized protein from Dictyostelium discoideum (Social amoeba).